A 381-amino-acid polypeptide reads, in one-letter code: Odorant receptor 46a, isoform A (381 aa).

The Cytoplasmic segment spans residues 1 to 37; the sequence is MSKGVEIFYKGQKAFLNILSLWPQIERRWRIIHQVNY. Residues 38 to 58 traverse the membrane as a helical segment; it reads VHVIVFWVLLFDLLLVLHVMA. An N-linked (GlcNAc...) asparagine glycan is attached at asparagine 59. Residues 59–65 lie on the Extracellular side of the membrane; sequence NLSYMSE. A helical transmembrane segment spans residues 66 to 86; that stretch reads VVKAIFILATSAGHTTKLLSI. The Cytoplasmic portion of the chain corresponds to 87-127; the sequence is KANNVQMEELFRRLDNEEFRPRGANEELIFAAACERSRKLR. Residues 128–148 form a helical membrane-spanning segment; that stretch reads DFYGALSFAALSMILIPQFAL. The Extracellular segment spans residues 149 to 170; it reads DWSHLPLKTYNPLGENTGSPAY. A helical transmembrane segment spans residues 171–191; that stretch reads WLLYCYQCLALSVSCITNIGF. Over 192–255 the chain is Cytoplasmic; that stretch reads DSLCSSLFIF…KTVERLLCKP (64 aa). Residues 256 to 276 traverse the membrane as a helical segment; it reads ISVQIFCSVLVLTANFYAIAV. Over 277–287 the chain is Extracellular; the sequence is LSDERLELFKY. Residues 288–308 form a helical membrane-spanning segment; sequence VTYQACMLIQIFILCYYAGEV. Over 309 to 355 the chain is Cytoplasmic; it reads TQRSLDLPHELYKTSWVDWDYRSRRIALLFMQRLHSTLRIRTLNPSL. The chain crosses the membrane as a helical span at residues 356–376; the sequence is GFDLMLFSSIVNCSYSYFALL. Over 377–381 the chain is Extracellular; that stretch reads KRVNS.

This sequence belongs to the insect chemoreceptor superfamily. Heteromeric odorant receptor channel (TC 1.A.69) family. Or2a subfamily. Interacts with Orco. Complexes exist early in the endomembrane system in olfactory sensory neurons (OSNs), coupling these complexes to the conserved ciliary trafficking pathway. Isoform A is expressed in a subset of 17 olfactory receptor neurons in the maxillary palp.

Its subcellular location is the cell membrane. In terms of biological role, odorant receptor which mediates acceptance or avoidance behavior, depending on its substrates. The odorant receptor repertoire encodes a large collection of odor stimuli that vary widely in identity, intensity, and duration. May form a complex with Orco to form odorant-sensing units, providing sensitive and prolonged odorant signaling and calcium permeability. The chain is Odorant receptor 46a, isoform A (Or46a) from Drosophila melanogaster (Fruit fly).